Reading from the N-terminus, the 852-residue chain is Lon protease homolog 2, peroxisomal (852 aa).

At Ser-2 the chain carries N-acetylserine. A Lon N-terminal domain is found at 13–222 (LPLLLTHESV…MTIPLLVRQI (210 aa)). Position 375–382 (375–382 (GPPGVGKT)) interacts with ATP. A Lon proteolytic domain is found at 651–837 (LSQPGVAIGL…DEVLNAAFDG (187 aa)). Residues Ser-743 and Lys-786 contribute to the active site. The Microbody targeting signal signature appears at 850-852 (SKL).

It belongs to the peptidase S16 family. Interacts with PEX5. Interacts with TYSND1. May interact with enzymes involved in beta-oxidation of fatty acids, including ACOX1/AOX.

It localises to the peroxisome matrix. It carries out the reaction Hydrolysis of proteins in presence of ATP.. Its function is as follows. ATP-dependent serine protease that mediates the selective degradation of misfolded and unassembled polypeptides in the peroxisomal matrix. Necessary for type 2 peroxisome targeting signal (PTS2)-containing protein processing and facilitates peroxisome matrix protein import. May indirectly regulate peroxisomal fatty acid beta-oxidation through degradation of the self-processed forms of TYSND1. The chain is Lon protease homolog 2, peroxisomal (Lonp2) from Mus musculus (Mouse).